The primary structure comprises 104 residues: V-type ATP synthase subunit F (104 aa).

This sequence belongs to the V-ATPase F subunit family.

In terms of biological role, produces ATP from ADP in the presence of a proton gradient across the membrane. The polypeptide is V-type ATP synthase subunit F (Thermus thermophilus (strain ATCC BAA-163 / DSM 7039 / HB27)).